The following is a 28-amino-acid chain: fur leader peptide (28 aa).

Its function is as follows. Cotranscribed with fur, it is essential for fur translation. The fur ribosomal binding site (RBS) is occluded by the 5'-mRNA secondary structure, which is opened by uof translation. In Escherichia coli (strain K12), this protein is fur leader peptide (uof).